The sequence spans 125 residues: TSSK6-activating co-chaperone protein (125 aa).

2 disordered regions span residues 1–21 and 97–125; these read MEQH…ANAV and LAPG…QFSK. Low complexity predominate over residues 103 to 125; it reads SNNSSLPALSPNPLLNHLPQFSK.

This sequence belongs to the TSACC family. In terms of assembly, interacts with HSP70. Associates with HSP90. Interacts with TSSK6; this interaction is direct and recruits TSACC to HSP90.

Co-chaperone that facilitates HSP-mediated activation of TSSK6. The chain is TSSK6-activating co-chaperone protein (TSACC) from Macaca fascicularis (Crab-eating macaque).